The primary structure comprises 297 residues: 4-hydroxy-tetrahydrodipicolinate synthase (297 aa).

Residue Thr49 coordinates pyruvate. Catalysis depends on Tyr137, which acts as the Proton donor/acceptor. Lys166 functions as the Schiff-base intermediate with substrate in the catalytic mechanism. Ile208 contacts pyruvate.

It belongs to the DapA family. As to quaternary structure, homotetramer; dimer of dimers.

The protein resides in the cytoplasm. It catalyses the reaction L-aspartate 4-semialdehyde + pyruvate = (2S,4S)-4-hydroxy-2,3,4,5-tetrahydrodipicolinate + H2O + H(+). The protein operates within amino-acid biosynthesis; L-lysine biosynthesis via DAP pathway; (S)-tetrahydrodipicolinate from L-aspartate: step 3/4. Its function is as follows. Catalyzes the condensation of (S)-aspartate-beta-semialdehyde [(S)-ASA] and pyruvate to 4-hydroxy-tetrahydrodipicolinate (HTPA). In Prosthecochloris aestuarii (strain DSM 271 / SK 413), this protein is 4-hydroxy-tetrahydrodipicolinate synthase.